A 243-amino-acid chain; its full sequence is Leucyl/phenylalanyl-tRNA--protein transferase (243 aa).

The disordered stretch occupies residues 1-22 (MHSQPYLLSPTPNTPFPPAEHA).

It belongs to the L/F-transferase family.

It is found in the cytoplasm. The enzyme catalyses N-terminal L-lysyl-[protein] + L-leucyl-tRNA(Leu) = N-terminal L-leucyl-L-lysyl-[protein] + tRNA(Leu) + H(+). It catalyses the reaction N-terminal L-arginyl-[protein] + L-leucyl-tRNA(Leu) = N-terminal L-leucyl-L-arginyl-[protein] + tRNA(Leu) + H(+). The catalysed reaction is L-phenylalanyl-tRNA(Phe) + an N-terminal L-alpha-aminoacyl-[protein] = an N-terminal L-phenylalanyl-L-alpha-aminoacyl-[protein] + tRNA(Phe). In terms of biological role, functions in the N-end rule pathway of protein degradation where it conjugates Leu, Phe and, less efficiently, Met from aminoacyl-tRNAs to the N-termini of proteins containing an N-terminal arginine or lysine. The sequence is that of Leucyl/phenylalanyl-tRNA--protein transferase from Xylella fastidiosa (strain M23).